A 201-amino-acid chain; its full sequence is 3-isopropylmalate dehydratase small subunit (201 aa).

This sequence belongs to the LeuD family. LeuD type 1 subfamily. As to quaternary structure, heterodimer of LeuC and LeuD.

It catalyses the reaction (2R,3S)-3-isopropylmalate = (2S)-2-isopropylmalate. It functions in the pathway amino-acid biosynthesis; L-leucine biosynthesis; L-leucine from 3-methyl-2-oxobutanoate: step 2/4. Its function is as follows. Catalyzes the isomerization between 2-isopropylmalate and 3-isopropylmalate, via the formation of 2-isopropylmaleate. The sequence is that of 3-isopropylmalate dehydratase small subunit from Methylorubrum extorquens (strain CM4 / NCIMB 13688) (Methylobacterium extorquens).